The following is a 433-amino-acid chain: 3-phosphoshikimate 1-carboxyvinyltransferase (433 aa).

3-phosphoshikimate is bound by residues Lys15, Ser16, and Arg20. Lys15 provides a ligand contact to phosphoenolpyruvate. 2 residues coordinate phosphoenolpyruvate: Gly96 and Arg124. Residues Ser169, Gln171, Asp318, and Lys345 each coordinate 3-phosphoshikimate. Residue Gln171 participates in phosphoenolpyruvate binding. The Proton acceptor role is filled by Asp318. Arg349 and Arg393 together coordinate phosphoenolpyruvate.

The protein belongs to the EPSP synthase family. In terms of assembly, monomer.

The protein localises to the cytoplasm. It catalyses the reaction 3-phosphoshikimate + phosphoenolpyruvate = 5-O-(1-carboxyvinyl)-3-phosphoshikimate + phosphate. It participates in metabolic intermediate biosynthesis; chorismate biosynthesis; chorismate from D-erythrose 4-phosphate and phosphoenolpyruvate: step 6/7. In terms of biological role, catalyzes the transfer of the enolpyruvyl moiety of phosphoenolpyruvate (PEP) to the 5-hydroxyl of shikimate-3-phosphate (S3P) to produce enolpyruvyl shikimate-3-phosphate and inorganic phosphate. This is 3-phosphoshikimate 1-carboxyvinyltransferase from Chlorobium phaeovibrioides (strain DSM 265 / 1930) (Prosthecochloris vibrioformis (strain DSM 265)).